We begin with the raw amino-acid sequence, 189 residues long: GTPase NRas (189 aa).

GTP contacts are provided by residues G10 to A18 and V29 to D30. Residues Y32 to Y40 carry the Effector region motif. D57–Q61 lines the GTP pocket. S89 carries the phosphoserine modification. Residue N116 to D119 coordinates GTP. The tract at residues Y166 to P185 is hypervariable region. Residue K170 forms a Glycyl lysine isopeptide (Lys-Gly) (interchain with G-Cter in ubiquitin) linkage. C181 carries the S-palmitoyl cysteine lipid modification. The S-farnesyl cysteine moiety is linked to residue C186. The propeptide at V187–M189 is removed in mature form.

The protein belongs to the small GTPase superfamily. Ras family. In terms of assembly, interacts (active GTP-bound form preferentially) with RGS14. Interacts (active GTP-bound form) with RASSF7. Interacts (active GTP-bound form) with both SHOC2 and PP1c (all isoforms) to form a tertiary complex; SHOC2 and PP1c preferably bind M-Ras/MRAS, but they also bind K-Ras/KRAS, N-Ras/NRAS and H-Ras/HRAS. Palmitoylated by the ZDHHC9-GOLGA7 complex. Depalmitoylated by ABHD17A, ABHD17B and ABHD17C. A continuous cycle of de- and re-palmitoylation regulates rapid exchange between plasma membrane and Golgi. In terms of processing, acetylation at Lys-104 prevents interaction with guanine nucleotide exchange factors (GEFs). Post-translationally, ubiquitinated by the BCR(LZTR1) E3 ubiquitin ligase complex at Lys-170 in a non-degradative manner, leading to inhibit Ras signaling by decreasing Ras association with membranes. Phosphorylation at Ser-89 enhances NRAS association with its downstream effectors.

The protein resides in the cell membrane. The protein localises to the golgi apparatus membrane. The catalysed reaction is GTP + H2O = GDP + phosphate + H(+). Its activity is regulated as follows. Alternates between an inactive form bound to GDP and an active form bound to GTP. Activated by a guanine nucleotide-exchange factor (GEF) and inactivated by a GTPase-activating protein (GAP). In terms of biological role, ras proteins bind GDP/GTP and possess intrinsic GTPase activity. The polypeptide is GTPase NRas (Nras) (Rattus norvegicus (Rat)).